Here is a 587-residue protein sequence, read N- to C-terminus: MTQINFNASYTSAPTPSRASFDNGYSEFCDKQQPNDYLNYYNNPTPDGADTVVSDSRLQAASNFLASVNSLTDDNDIMECLLKTTDNLGEAVSSAYNAESFELPVAEQPSPSSAYNAESFEHPVGVNQPSATGTKRKLDEYLDDSQSVVGQFNKNKLKPKYKKSTIQSCATLEQTINHNTNICTVASTQEITHYFTNDFAPYLMRFDDNDYNSNRFSDHMSETGYYMFVVKKSEVKPFEIIFAKYVSNVVYEYTNNYYMVDNRVFVVTFDKIRFMISYNLVKETGIEIPHSQDVCNDETAAQNCKKCHFVDVHHTFKAALTSYFNLDMYYAQTTFVTLLQSLGERKCGFLLSKLYEMYQDKNLFTLPIMLSRKESNEIETASNNFFVSPYVSQILKYSESIRKVKFPDNPPNKYVVDNLNLIVNKKSTLTYKYSSVANLLFNNYKYHDNIASNNNAENLKKVKKEDGSMHIVEQYLTQNVDNVKGHNFIVLSFKNEERLTIAKKNEEFYWISGEIKDVDASQVIQKYNRFKHHMFVISKVNRRESTTLHNNLLKLLALILQGLVPLSDAITFAEQKLNCKYKKFEFN.

The protein belongs to the nucleopolyhedrovirus IE-1 protein family.

Regulatory transcriptional protein, which trans-activates gene expression from early baculovirus promoters. Can also trans-activate its own promoter, suggesting that it is autoregulated during normal infection of insect cells. The sequence is that of Trans-activating transcriptional regulatory protein (IE1) from Bombyx mori nuclear polyhedrosis virus (BmNPV).